Consider the following 378-residue polypeptide: Succinate--CoA ligase [ADP-forming] subunit beta (378 aa).

Residues 9–237 form the ATP-grasp domain; the sequence is RDIVARYGIP…IAGEPESEIK (229 aa). ATP-binding positions include K45, 52 to 54, I94, and E99; that span reads GRG. Mg(2+)-binding residues include N192 and D206. Substrate is bound by residues N257 and 314-316; that span reads GIT.

Belongs to the succinate/malate CoA ligase beta subunit family. As to quaternary structure, heterotetramer of two alpha and two beta subunits. Mg(2+) is required as a cofactor.

The catalysed reaction is succinate + ATP + CoA = succinyl-CoA + ADP + phosphate. It catalyses the reaction GTP + succinate + CoA = succinyl-CoA + GDP + phosphate. It functions in the pathway carbohydrate metabolism; tricarboxylic acid cycle; succinate from succinyl-CoA (ligase route): step 1/1. Functionally, succinyl-CoA synthetase functions in the citric acid cycle (TCA), coupling the hydrolysis of succinyl-CoA to the synthesis of either ATP or GTP and thus represents the only step of substrate-level phosphorylation in the TCA. The beta subunit provides nucleotide specificity of the enzyme and binds the substrate succinate, while the binding sites for coenzyme A and phosphate are found in the alpha subunit. The chain is Succinate--CoA ligase [ADP-forming] subunit beta from Herpetosiphon aurantiacus (strain ATCC 23779 / DSM 785 / 114-95).